Reading from the N-terminus, the 513-residue chain is NAD(P)H-quinone oxidoreductase subunit 2, chloroplastic (513 aa).

A run of 14 helical transmembrane segments spans residues 11 to 31 (NLITILPECVLIICLLTILMI), 38 to 58 (SVWLSNIALLGLLTSTFILLF), 78 to 98 (GFTIAFRCLLTLSSALCIPLS), 112 to 132 (FLILLLTATLGGMFLCGANDL), 133 to 153 (VTIFVSLECLSLSSYLLAGQA), 167 to 187 (LLMGGASSSILVYGFSWLYGL), 219 to 239 (FGALGLWVAFVCILVGIGFKI), 256 to 276 (PTPVVAFLSVGSKAAGLALAT), 290 to 310 (WHIVLEIVAFLSMVFGNLIAA), 318 to 338 (MLAYSSISQAGYLLIAILVGN), 348 to 368 (YLLIYTFMNLGAFACTVIFGL), 389 to 409 (AFALSICLLSLAGMPPLAGFF), 422 to 442 (HLYLLVYTGLITSVISLYYYL), and 478 to 498 (LGLTLCVLASSILGFFMNPLI).

The protein belongs to the complex I subunit 2 family. As to quaternary structure, NDH is composed of at least 16 different subunits, 5 of which are encoded in the nucleus.

It is found in the plastid. Its subcellular location is the chloroplast thylakoid membrane. It carries out the reaction a plastoquinone + NADH + (n+1) H(+)(in) = a plastoquinol + NAD(+) + n H(+)(out). It catalyses the reaction a plastoquinone + NADPH + (n+1) H(+)(in) = a plastoquinol + NADP(+) + n H(+)(out). Functionally, NDH shuttles electrons from NAD(P)H:plastoquinone, via FMN and iron-sulfur (Fe-S) centers, to quinones in the photosynthetic chain and possibly in a chloroplast respiratory chain. The immediate electron acceptor for the enzyme in this species is believed to be plastoquinone. Couples the redox reaction to proton translocation, and thus conserves the redox energy in a proton gradient. The sequence is that of NAD(P)H-quinone oxidoreductase subunit 2, chloroplastic from Staurastrum punctulatum (Green alga).